A 185-amino-acid chain; its full sequence is Intraflagellar transport protein 22 homolog (185 aa).

GTP-binding positions include 10–17 (GPCESGKT), 63–67 (DCGGD), and 123–126 (HKPG). At Ser-137 the chain carries Phosphoserine.

It belongs to the small GTPase superfamily. Rab family. As to quaternary structure, component of the IFT complex B, at least composed of IFT20, IFT22, IFT25, IFT27, IFT46, IFT52, TRAF3IP1/IFT54, IFT57, IFT74, IFT80, IFT81, and IFT88. Interacts with IFT88. Interacts with CFAP61.

The protein resides in the cell projection. It localises to the cilium. In terms of biological role, small GTPase-like component of the intraflagellar transport (IFT) complex B. The sequence is that of Intraflagellar transport protein 22 homolog (IFT22) from Homo sapiens (Human).